Consider the following 151-residue polypeptide: Prefoldin subunit alpha (151 aa).

Positions T120–E151 are disordered. Over residues Q133 to E151 the composition is skewed to low complexity.

It belongs to the prefoldin subunit alpha family. As to quaternary structure, heterohexamer of two alpha and four beta subunits.

Its subcellular location is the cytoplasm. Its function is as follows. Molecular chaperone capable of stabilizing a range of proteins. Seems to fulfill an ATP-independent, HSP70-like function in archaeal de novo protein folding. The sequence is that of Prefoldin subunit alpha from Natronomonas pharaonis (strain ATCC 35678 / DSM 2160 / CIP 103997 / JCM 8858 / NBRC 14720 / NCIMB 2260 / Gabara) (Halobacterium pharaonis).